The primary structure comprises 391 residues: Histidinol-phosphate aminotransferase (391 aa).

At lysine 246 the chain carries N6-(pyridoxal phosphate)lysine.

This sequence belongs to the class-II pyridoxal-phosphate-dependent aminotransferase family. Histidinol-phosphate aminotransferase subfamily. Pyridoxal 5'-phosphate serves as cofactor.

It carries out the reaction L-histidinol phosphate + 2-oxoglutarate = 3-(imidazol-4-yl)-2-oxopropyl phosphate + L-glutamate. It participates in amino-acid biosynthesis; L-histidine biosynthesis; L-histidine from 5-phospho-alpha-D-ribose 1-diphosphate: step 7/9. The chain is Histidinol-phosphate aminotransferase from Methanopyrus kandleri (strain AV19 / DSM 6324 / JCM 9639 / NBRC 100938).